The chain runs to 298 residues: Ribonuclease HII (298 aa).

Positions 1–57 are disordered; the sequence is MIREPQKSAKAASKSSAPRARSSVAKATSTKATSSKAASSKAAPSKAGADAGAAKPR. The segment covering 8–55 has biased composition (low complexity); the sequence is SAKAASKSSAPRARSSVAKATSTKATSSKAASSKAAPSKAGADAGAAK. An RNase H type-2 domain is found at 85 to 273; that stretch reads WPVAGCDEAG…VAAAWRKIEG (189 aa). A divalent metal cation is bound by residues Asp-91, Glu-92, and Asp-182.

This sequence belongs to the RNase HII family. Mn(2+) serves as cofactor. The cofactor is Mg(2+).

It is found in the cytoplasm. The catalysed reaction is Endonucleolytic cleavage to 5'-phosphomonoester.. Endonuclease that specifically degrades the RNA of RNA-DNA hybrids. This is Ribonuclease HII from Rhodopseudomonas palustris (strain BisB5).